The following is a 232-amino-acid chain: Adenosylcobinamide-GDP ribazoletransferase (232 aa).

6 helical membrane passes run Leu31–Leu51, Val59–Asp79, Val102–Leu122, Pro126–Phe146, Leu167–Ser187, and Val209–Leu229.

This sequence belongs to the CobS family. Mg(2+) is required as a cofactor.

Its subcellular location is the cell inner membrane. The enzyme catalyses alpha-ribazole + adenosylcob(III)inamide-GDP = adenosylcob(III)alamin + GMP + H(+). It catalyses the reaction alpha-ribazole 5'-phosphate + adenosylcob(III)inamide-GDP = adenosylcob(III)alamin 5'-phosphate + GMP + H(+). The protein operates within cofactor biosynthesis; adenosylcobalamin biosynthesis; adenosylcobalamin from cob(II)yrinate a,c-diamide: step 7/7. Functionally, joins adenosylcobinamide-GDP and alpha-ribazole to generate adenosylcobalamin (Ado-cobalamin). Also synthesizes adenosylcobalamin 5'-phosphate from adenosylcobinamide-GDP and alpha-ribazole 5'-phosphate. This Thermosipho africanus (strain TCF52B) protein is Adenosylcobinamide-GDP ribazoletransferase.